Reading from the N-terminus, the 129-residue chain is Putative redox protein FMP46, mitochondrial (129 aa).

Residues 1 to 21 (MSMFRTLQRQPRTISLFTHDL) constitute a mitochondrion transit peptide. C94 is a catalytic residue.

This sequence belongs to the FMP46 family.

The protein localises to the mitochondrion. Its function is as follows. Putative mitochondrial redox protein which could be involved in the reduction of small toxic molecules. In Candida glabrata (strain ATCC 2001 / BCRC 20586 / JCM 3761 / NBRC 0622 / NRRL Y-65 / CBS 138) (Yeast), this protein is Putative redox protein FMP46, mitochondrial (FMP46).